A 982-amino-acid polypeptide reads, in one-letter code: MNAPHPASAALTQTLAARPTLAELEARDAFAERHIGPSPDEQAAMLATLGYASRAALIDAVIPPAIRRQDGMPLGEFTQPLTEEAALAKLRGIAGQNRVVRSLIGQGYYGTHTPGVILRNILENPAWYTAYTPYQPEISQGRLEAMLNFQQMVMDLTAMDIANASMLDEATAAAEAMTLLQRVGKHPSNVFFVADDVLPQTLDVVRTRAEPIGVQVVTGPAADAAKHNAFGVLLQYPGTGGALLGGLSTYQALTDAVHAAGGLVVAAADLLALTLLAAPGEWGADVVIGNTQRFGVPFGFGGPHAGYMAVRDAFKRSMPGRLVGVTVDAQGNPAYRLALQTREQHIRREKATSNICTAQVLLGVMASMYAVYHGPQGLKRIAQRVHRLTATLAAGLRQIGYTLEAGAFFDTLTVATGPRTANLHIAAQAHGFNLRQIDDGRLGVSLDETVTRAEVVALWEIFAHAAHAGAPDFDQVEAGIADAFPASLARQSAYLTHPVFNAHHSEHEMLRYLRSLADKDLALDRTMIPLGSCTMKLNATAEMLPVTWPEFANIHPFAPADQTVGYREMIDQLEQMLCAATGYAAVSLQPNAGSQGEYAGLLIIHAYHASRGESHRDVCLIPSSAHGTNPASAQMAGMKVVVVACDERGNVDLADLEKKAAEHSANLAAIMITYPSTHGVFEEGVKRVCEIVHSHGGQVYVDGANMNAMVGTAAPGHFGGDVSHLNLHKTFCIPHGGGGPGVGPVAVGAHLAPFLPGRAASGEDASQNIGAVSAAPFGSASILPISWMYIAMMGAAGLTAATEAAILSANYVARRLSPYYPVLYTGAHGLVAHECILDIRPLQKESGISNEDIAKRLMDFGFHAPTMSFPVPGTLMIEPTESEPKVELDRFIDAMIAIRGEVDQVISGAFDREDNPLKHAPHTAQVVMADDWSHRYTREQAAYPVASLRTRKYWPPVGRADNVYGDRNLFCACVPMSEYAQD.

Residue Lys729 is modified to N6-(pyridoxal phosphate)lysine.

Belongs to the GcvP family. In terms of assembly, the glycine cleavage system is composed of four proteins: P, T, L and H. It depends on pyridoxal 5'-phosphate as a cofactor.

It carries out the reaction N(6)-[(R)-lipoyl]-L-lysyl-[glycine-cleavage complex H protein] + glycine + H(+) = N(6)-[(R)-S(8)-aminomethyldihydrolipoyl]-L-lysyl-[glycine-cleavage complex H protein] + CO2. Functionally, the glycine cleavage system catalyzes the degradation of glycine. The P protein binds the alpha-amino group of glycine through its pyridoxal phosphate cofactor; CO(2) is released and the remaining methylamine moiety is then transferred to the lipoamide cofactor of the H protein. This is Glycine dehydrogenase (decarboxylating) from Ralstonia nicotianae (strain ATCC BAA-1114 / GMI1000) (Ralstonia solanacearum).